The chain runs to 785 residues: Endonuclease MutS2 (785 aa).

Residue 332–339 (GPNTGGKT) participates in ATP binding. A Smr domain is found at 710 to 785 (IDLRGLDAEE…GDGATIVELK (76 aa)).

The protein belongs to the DNA mismatch repair MutS family. MutS2 subfamily. Homodimer. Binds to stalled ribosomes, contacting rRNA.

In terms of biological role, endonuclease that is involved in the suppression of homologous recombination and thus may have a key role in the control of bacterial genetic diversity. Functionally, acts as a ribosome collision sensor, splitting the ribosome into its 2 subunits. Detects stalled/collided 70S ribosomes which it binds and splits by an ATP-hydrolysis driven conformational change. Acts upstream of the ribosome quality control system (RQC), a ribosome-associated complex that mediates the extraction of incompletely synthesized nascent chains from stalled ribosomes and their subsequent degradation. Probably generates substrates for RQC. The protein is Endonuclease MutS2 of Clostridium botulinum (strain Eklund 17B / Type B).